Consider the following 102-residue polypeptide: Gonadotropin subunit beta-1 (102 aa).

5 disulfide bridges follow: Cys8/Cys51, Cys20/Cys65, Cys31/Cys77, Cys35/Cys79, and Cys82/Cys89. Residue Asn12 is glycosylated (N-linked (GlcNAc...) asparagine).

It belongs to the glycoprotein hormones subunit beta family. As to quaternary structure, heterodimer of an alpha and a beta chain.

Its subcellular location is the secreted. Involved in gametogenesis and steroidogenesis. This Thunnus obesus (Bigeye tuna) protein is Gonadotropin subunit beta-1 (cgba).